The chain runs to 111 residues: Latartoxin-2b (111 aa).

An N-terminal signal peptide occupies residues 1–19 (MKVLVIIALCFFILQTALS). A propeptide spans 20–43 (EDKYESFESYVEDLKSGNMKGEAR) (removed in mature form). A Processing quadruplet motif motif is present at residues 40 to 43 (GEAR). Disulfide bonds link cysteine 45–cysteine 62, cysteine 52–cysteine 73, cysteine 61–cysteine 87, cysteine 75–cysteine 85, and cysteine 78–cysteine 99. Valine 110 carries the post-translational modification Valine amide.

Belongs to the neurotoxin 19 (CSTX) family. 11 (latartoxin) subfamily. In terms of processing, contains 5 disulfide bonds. Cleavage of the propeptide depends on the processing quadruplet motif (XXXR, with at least one of X being E). In terms of tissue distribution, expressed by the venom gland.

Its subcellular location is the secreted. In terms of biological role, insect toxin. The sequence is that of Latartoxin-2b from Lachesana tarabaevi (Spider).